An 88-amino-acid polypeptide reads, in one-letter code: Small ribosomal subunit protein uS15 (88 aa).

Belongs to the universal ribosomal protein uS15 family. Part of the 30S ribosomal subunit. Forms a bridge to the 50S subunit in the 70S ribosome, contacting the 23S rRNA.

One of the primary rRNA binding proteins, it binds directly to 16S rRNA where it helps nucleate assembly of the platform of the 30S subunit by binding and bridging several RNA helices of the 16S rRNA. Functionally, forms an intersubunit bridge (bridge B4) with the 23S rRNA of the 50S subunit in the ribosome. In Geobacter sp. (strain M21), this protein is Small ribosomal subunit protein uS15.